The primary structure comprises 485 residues: NADH-quinone oxidoreductase subunit N (485 aa).

The next 14 membrane-spanning stretches (helical) occupy residues 8–28, 35–55, 71–91, 105–125, 127–147, 159–179, 203–223, 235–255, 271–291, 297–317, 326–346, 373–393, 408–430, and 455–475; these read LIAL…MLSI, FLNA…LWFV, GFAM…CTFA, FYLL…ANHL, ALFL…GYAF, YTIL…LVYA, LLAG…LVPF, PAPV…GVVM, VVLG…ALSQ, LLGY…IVLQ, VGVY…VVSL, AAVM…LGFI, WWLV…RVAV, and IVVL…QPLI.

The protein belongs to the complex I subunit 2 family. In terms of assembly, NDH-1 is composed of 13 different subunits. Subunits NuoA, H, J, K, L, M, N constitute the membrane sector of the complex.

It localises to the cell inner membrane. It catalyses the reaction a quinone + NADH + 5 H(+)(in) = a quinol + NAD(+) + 4 H(+)(out). Functionally, NDH-1 shuttles electrons from NADH, via FMN and iron-sulfur (Fe-S) centers, to quinones in the respiratory chain. The immediate electron acceptor for the enzyme in this species is believed to be ubiquinone. Couples the redox reaction to proton translocation (for every two electrons transferred, four hydrogen ions are translocated across the cytoplasmic membrane), and thus conserves the redox energy in a proton gradient. In Salmonella choleraesuis (strain SC-B67), this protein is NADH-quinone oxidoreductase subunit N.